Reading from the N-terminus, the 375-residue chain is 23S rRNA (uracil(747)-C(5))-methyltransferase RlmC (375 aa).

Cysteine 3, cysteine 11, cysteine 14, and cysteine 87 together coordinate [4Fe-4S] cluster. Residues glutamine 212, phenylalanine 241, glutamate 262, and asparagine 307 each contribute to the S-adenosyl-L-methionine site. Cysteine 334 acts as the Nucleophile in catalysis.

It belongs to the class I-like SAM-binding methyltransferase superfamily. RNA M5U methyltransferase family. RlmC subfamily.

The enzyme catalyses uridine(747) in 23S rRNA + S-adenosyl-L-methionine = 5-methyluridine(747) in 23S rRNA + S-adenosyl-L-homocysteine + H(+). In terms of biological role, catalyzes the formation of 5-methyl-uridine at position 747 (m5U747) in 23S rRNA. This is 23S rRNA (uracil(747)-C(5))-methyltransferase RlmC from Escherichia coli (strain SE11).